Here is a 128-residue protein sequence, read N- to C-terminus: Lutropin subunit beta (128 aa).

A signal peptide spans 1–20 (MERLQGLLLWLLLSPSVVWA). 5 disulfide bridges follow: cysteine 29/cysteine 77, cysteine 43/cysteine 92, cysteine 54/cysteine 108, cysteine 58/cysteine 110, and cysteine 113/cysteine 120. A glycan (N-linked (GlcNAc...) asparagine) is linked at asparagine 33.

The protein belongs to the glycoprotein hormones subunit beta family. Heterodimer of a common alpha chain and a unique beta chain which confers biological specificity to thyrotropin, lutropin, follitropin and gonadotropin.

Its subcellular location is the secreted. Promotes spermatogenesis and ovulation by stimulating the testes and ovaries to synthesize steroids. This Phodopus sungorus (Striped hairy-footed hamster) protein is Lutropin subunit beta (LHB).